The following is a 1072-amino-acid chain: Carbamoyl phosphate synthase large chain (1072 aa).

The interval 1–401 (MPKRLDINTI…SLLKAVRSLE (401 aa)) is carboxyphosphate synthetic domain. Positions 129, 169, 175, 176, 208, 210, 215, 241, 242, 243, 284, and 298 each coordinate ATP. One can recognise an ATP-grasp 1 domain in the interval 133–327 (RTLMQDLNEP…IAKLAAKIAV (195 aa)). Residues Q284, E298, and N300 each coordinate Mg(2+). 3 residues coordinate Mn(2+): Q284, E298, and N300. An oligomerization domain region spans residues 402 to 546 (LGIYHLELDH…YSTYADENES (145 aa)). Residues 547-929 (IVTDRKSVVV…ALYKGLVASG (383 aa)) form a carbamoyl phosphate synthetic domain region. An ATP-grasp 2 domain is found at 671 to 861 (EAALTKLGIP…MANVATKVIL (191 aa)). Positions 707, 746, 752, 777, 778, 779, 780, 820, and 832 each coordinate ATP. The Mg(2+) site is built by Q820, E832, and N834. Q820, E832, and N834 together coordinate Mn(2+). Residues 930–1072 (INIPTHGSVI…QTKRHEVVHA (143 aa)) form the MGS-like domain. An allosteric domain region spans residues 930-1072 (INIPTHGSVI…QTKRHEVVHA (143 aa)).

It belongs to the CarB family. In terms of assembly, composed of two chains; the small (or glutamine) chain promotes the hydrolysis of glutamine to ammonia, which is used by the large (or ammonia) chain to synthesize carbamoyl phosphate. Tetramer of heterodimers (alpha,beta)4. It depends on Mg(2+) as a cofactor. Mn(2+) is required as a cofactor.

It catalyses the reaction hydrogencarbonate + L-glutamine + 2 ATP + H2O = carbamoyl phosphate + L-glutamate + 2 ADP + phosphate + 2 H(+). It carries out the reaction hydrogencarbonate + NH4(+) + 2 ATP = carbamoyl phosphate + 2 ADP + phosphate + 2 H(+). It functions in the pathway amino-acid biosynthesis; L-arginine biosynthesis; carbamoyl phosphate from bicarbonate: step 1/1. It participates in pyrimidine metabolism; UMP biosynthesis via de novo pathway; (S)-dihydroorotate from bicarbonate: step 1/3. In terms of biological role, large subunit of the glutamine-dependent carbamoyl phosphate synthetase (CPSase). CPSase catalyzes the formation of carbamoyl phosphate from the ammonia moiety of glutamine, carbonate, and phosphate donated by ATP, constituting the first step of 2 biosynthetic pathways, one leading to arginine and/or urea and the other to pyrimidine nucleotides. The large subunit (synthetase) binds the substrates ammonia (free or transferred from glutamine from the small subunit), hydrogencarbonate and ATP and carries out an ATP-coupled ligase reaction, activating hydrogencarbonate by forming carboxy phosphate which reacts with ammonia to form carbamoyl phosphate. The polypeptide is Carbamoyl phosphate synthase large chain (Bacillus cereus (strain AH187)).